Reading from the N-terminus, the 554-residue chain is MGSGKVTFVALLLCLSVGVIAEDPYLYFNWNVTYGTIAPLGVPQQGILINGQFPGPRINCTSNNNIVVNVFNNLDEPFLFTWNGVQHRKNSWQDGTPGTMCPIMPGQNFTYRFQVKDQIGSYSYFPTTALHRAAGGYGALNVHSRALIPVPFDNPADEYNVFVGDWYNKGHKTLKKILDGGRTIGRPDGIIINGKSAKVGEAKEPLFTMEAGKTYRYRFCNLGMRSSVNIRFQGHPMKLVELEGSHTVQNIYDSLDLHVGQCLSVLVTADQEPKDYYLVVSSRFLKQALSSVAIIRYANGKGPASPELPTPPPENTEGIAWSMNQFRSFRWNLTASAARPNPQGSYHYGQINITRTIKIFNSMSQVGGKLRYGLNGISHTNGETPLKLVEYFGATNKAFKYDLMADEAPADPSKLTIATNVKNATYRNFVEIIFENHEKTIRTYHLDGYSFFAVAVEPGRWSPEKRKNYNLVDGLSRNNIQVYPNSWAAIMLTFDNAGMWNLRSEMWEKTYLGEQLYFSVLSPSRSLRDEYNIPDNHPLCGIVKGLSMPAPYKA.

The first 21 residues, 1–21 (MGSGKVTFVALLLCLSVGVIA), serve as a signal peptide directing secretion. Plastocyanin-like domains are found at residues 22–143 (EDPY…LNVH) and 196–296 (SAKV…AIIR). N-linked (GlcNAc...) asparagine glycans are attached at residues Asn31, Asn59, and Asn108. Cys101 and Cys540 are joined by a disulfide. N-linked (GlcNAc...) asparagine glycosylation is found at Asn332, Asn352, and Asn423. Residues 411–521 (DPSKLTIATN…LGEQLYFSVL (111 aa)) enclose the Plastocyanin-like 3 domain.

The protein belongs to the multicopper oxidase family. In terms of tissue distribution, pollen.

The protein localises to the secreted. Its subcellular location is the extracellular space. Its function is as follows. Probable oxidoreductase that may be involved in pollen tube growth. The protein is L-ascorbate oxidase homolog of Nicotiana tabacum (Common tobacco).